A 95-amino-acid polypeptide reads, in one-letter code: Small ribosomal subunit protein bS6 (95 aa).

This sequence belongs to the bacterial ribosomal protein bS6 family.

Its function is as follows. Binds together with bS18 to 16S ribosomal RNA. The polypeptide is Small ribosomal subunit protein bS6 (Oceanobacillus iheyensis (strain DSM 14371 / CIP 107618 / JCM 11309 / KCTC 3954 / HTE831)).